Here is an 86-residue protein sequence, read N- to C-terminus: Probable oxaloacetate decarboxylase gamma chain 1 (86 aa).

A helical transmembrane segment spans residues 11 to 33 (AATLMVTGMAVVFLFLTLLVYLV).

It belongs to the OadG family. As to quaternary structure, heterotrimer of an alpha, a beta and a gamma subunit. Requires Na(+) as cofactor.

The protein localises to the cell membrane. It catalyses the reaction oxaloacetate + 2 Na(+)(in) + H(+) = pyruvate + 2 Na(+)(out) + CO2. Catalyzes the decarboxylation of oxaloacetate coupled to Na(+) translocation. In Vibrio cholerae serotype O1 (strain ATCC 39315 / El Tor Inaba N16961), this protein is Probable oxaloacetate decarboxylase gamma chain 1 (oadG1).